A 530-amino-acid chain; its full sequence is Fusaric acid resistance protein FusA (530 aa).

Residues 1 to 23 (MQSPATKGTLALAVLAVSLIMAG) form the signal peptide. C24 carries the N-palmitoyl cysteine lipid modification. C24 carries the S-diacylglycerol cysteine lipid modification. Disordered regions lie at residues 375–442 (NAGV…RQRA) and 476–530 (GVET…PAAR). Composition is skewed to low complexity over residues 421 to 430 (RPQLPAVARR) and 494 to 530 (AAGAAAPAAASGAKPVAAAARPAQVAAAGAAGVPAAR).

Belongs to the outer membrane factor (OMF) (TC 1.B.17) family.

The protein resides in the cell membrane. Functionally, involved in the resistance (detoxification) of the fungal toxin fusaric acid. The chain is Fusaric acid resistance protein FusA (fusA) from Burkholderia cepacia (Pseudomonas cepacia).